A 198-amino-acid chain; its full sequence is Eukaryotic translation initiation factor isoform 4E (198 aa).

Residues 1 to 25 form a disordered region; that stretch reads MATDDVNEPLPAAAELPATEAEKQP. A2 is modified (N-acetylalanine). The segment covering 8–19 has biased composition (low complexity); sequence EPLPAAAELPAT. Residues 46–47 and 92–93 each bind mRNA; these read WG and WE. A disulfide bridge connects residues C97 and C138. 145–152 lines the mRNA pocket; sequence RPQSKQDK.

It belongs to the eukaryotic initiation factor 4E family. In terms of assembly, EIF4F is a multi-subunit complex, the composition of which varies with external and internal environmental conditions. It is composed of at least EIF4A, EIF4E and EIF4G. EIF4E is also known to interact with other partners. In higher plants two isoforms of EIF4F have been identified, named isoform EIF4F and isoform EIF(iso)4F. Isoform EIF4F has subunits p220 and p26, whereas isoform EIF(iso)4F has subunits p82 and p28. This isoform interacts with the viral protein genome linked (VPg)-proteinase of turnip mosaic potyvirus. Interacts directly with LOX2. Interacts with BTF3. In terms of processing, according to the redox status, the Cys-97-Cys-138 disulfide bridge may have a role in regulating protein function by affecting its ability to bind capped mRNA. In terms of tissue distribution, abundant in floral organs and in young developing tissues.

Its function is as follows. Recognizes and binds the 7-methylguanosine-containing mRNA cap during an early step in the initiation of protein synthesis and facilitates ribosome binding by inducing the unwinding of the mRNAs secondary structures. Mediates susceptibility to Turnipmosaic potyvirus (TuMV) and Tobacco etch potyvirus (TEV). This chain is Eukaryotic translation initiation factor isoform 4E (EIF(ISO)4E), found in Arabidopsis thaliana (Mouse-ear cress).